The following is a 135-amino-acid chain: Putative hydrolase EbsB (135 aa).

An RNase H type-1 domain is found at 1–128 (MLRIYVDAAT…ADMLARQALQ (128 aa)). Residues aspartate 7, glutamate 45, aspartate 71, and aspartate 120 each contribute to the Mg(2+) site.

The protein belongs to the RNase H family. EbsB subfamily. It depends on Mg(2+) as a cofactor.

It localises to the secreted. The protein resides in the cell wall. Functionally, seems to play some role in the cell surface expression of a chromosomally encoded receptor, named enterococcal binding substance (EBS), that mediates mating aggregate formation. Might interfere with the synthesis or assembly of EBS and function as a cell wall hydrolase. In Enterococcus faecalis (strain ATCC 700802 / V583), this protein is Putative hydrolase EbsB.